Consider the following 224-residue polypeptide: Heme response regulator HssR (224 aa).

The region spanning 3 to 116 (QCLVVDDDPR…ELIFRIRAVL (114 aa)) is the Response regulatory domain. Asp-52 carries the post-translational modification 4-aspartylphosphate. Residues 124–222 (NSEMTIGNLT…VRGQGYKVEN (99 aa)) constitute a DNA-binding region (ompR/PhoB-type).

Phosphorylated by HssS.

It is found in the cytoplasm. Member of the two-component regulatory system HssS/HssR involved in intracellular heme homeostasis and tempering of staphylococcal virulence. Phosphorylated HssR binds to a direct repeat sequence within hrtAB promoter and activates the expression of hrtAB, an efflux pump, in response to extracellular heme, hemin, hemoglobin or blood. This chain is Heme response regulator HssR (hssR), found in Staphylococcus aureus (strain COL).